The following is a 209-amino-acid chain: Chaperone protein TorD (209 aa).

The protein belongs to the TorD/DmsD family. TorD subfamily.

Its subcellular location is the cytoplasm. Involved in the biogenesis of TorA. Acts on TorA before the insertion of the molybdenum cofactor and, as a result, probably favors a conformation of the apoenzyme that is competent for acquiring the cofactor. This Salmonella bongori (strain ATCC 43975 / DSM 13772 / NCTC 12419) protein is Chaperone protein TorD.